The chain runs to 234 residues: Large ribosomal subunit protein uL1 (234 aa).

This sequence belongs to the universal ribosomal protein uL1 family. Part of the 50S ribosomal subunit.

Its function is as follows. Binds directly to 23S rRNA. The L1 stalk is quite mobile in the ribosome, and is involved in E site tRNA release. Functionally, protein L1 is also a translational repressor protein, it controls the translation of the L11 operon by binding to its mRNA. The chain is Large ribosomal subunit protein uL1 from Anaeromyxobacter dehalogenans (strain 2CP-1 / ATCC BAA-258).